The chain runs to 357 residues: Putative ABC transporter ATP-binding protein MG303 (357 aa).

The ABC transporter domain maps to 72–312; sequence LFFNNISVFV…TSWLMQYGIT (241 aa). 107–114 is a binding site for ATP; the sequence is GESGSGKT.

It belongs to the ABC transporter superfamily.

This is Putative ABC transporter ATP-binding protein MG303 from Mycoplasma genitalium (strain ATCC 33530 / DSM 19775 / NCTC 10195 / G37) (Mycoplasmoides genitalium).